Reading from the N-terminus, the 656-residue chain is MLLPRIPQLSHATRAAYVAAKSPFSPVPVRPFHASAALRAIDMAKVDTTHRLAELRKLMKERNVDIYMVPSEDSHQSEYIAPCDARRAYISGFTGSAGYAVITHEKAALSTDGRYFNQAEKQLDSNWELLKQGIQDVPTIQQWTADQAGGGKVVGVDPSVVTAGDARKLAEKIKKKGGEYKAIDENLVDLVWGSERPARPSEKVIVQPKKYAGKGFEDKIDDLRKELEKKKSLGFVVSMLDEVAWLFNLRGSDIPYNPVFFSYAVVTPTTATLYVDENKLPEDVKEHLGDKITIRPYEAIFGDVTALSKELFEANDKNETQKKFLTSNTASWALNKALGGDDKVEETRSPVGDSKAVKNEVELEGMRQCHIRDGAALSEYFAWLEDQLINKKATLDEVDGADKLEEIRKKHDMFMGLSFDTISSTGANAAVIHYKPEKGECATIDSKAIYLCDSGAQYRDGTTDTTRTLHFTEPTEMERKAYTLVLKGNMALERVKFPKGTTGFALDALARQFLWAEGLDYRHGTGHGVGSFLNVHEGPIGIGTRVQYSEVSLAVGNVVSDEPGYYEDGKFGIRIENMVMVKEVETKHKFGDKPYLGFEHVTMTPYCRNLVDMKLLTEDEKKFINDYHKEVYEKTSKYFDKDALTLEWLKRETAPY.

Mn(2+) is bound by residues D453, D464, E562, and E576.

This sequence belongs to the peptidase M24B family. Requires Mn(2+) as cofactor.

The enzyme catalyses Release of any N-terminal amino acid, including proline, that is linked to proline, even from a dipeptide or tripeptide.. Its function is as follows. Catalyzes the removal of a penultimate prolyl residue from the N-termini of peptides. This is Probable Xaa-Pro aminopeptidase P (ampp) from Pyrenophora teres f. teres (strain 0-1) (Barley net blotch fungus).